A 387-amino-acid chain; its full sequence is Putative gustatory receptor 22d (387 aa).

The Cytoplasmic segment spans residues 1-43 (MFRPRCGLRQKFVYVILKSILYSSWLLGIFPFKYEPKKRRLRR). Residues 44-64 (SMWLILFGVVISSSLLILMVK) form a helical membrane-spanning segment. Residues 65–82 (QSAEDREHGIMLDVFQRN) lie on the Extracellular side of the membrane. Residues 83–103 (ALLYQISSLMGVVGVVSICTV) traverse the membrane as a helical segment. Residues 104 to 142 (HLRTLWRSKHLEEIYNGLMLLEAKYFCSNAVECPAFDGY) lie on the Cytoplasmic side of the membrane. Residues 143-163 (VIQKGVVIVVGLLAPWMVHFG) traverse the membrane as a helical segment. The Extracellular segment spans residues 164-184 (MPDSKLPVLNVLVVSMVKLGT). A helical membrane pass occupies residues 185–205 (LLLALHYHLGVVIIYRFVWLI). The Cytoplasmic portion of the chain corresponds to 206-252 (NRELLSLVCSLRGNHKGSSSRVRFLLKLYNKLVNLYSKLADCYDCQT). A helical transmembrane segment spans residues 253 to 273 (VLMMAIFLAANIIVCFYMIVY). Over 274–281 (RISLSKMS) the chain is Extracellular. A helical membrane pass occupies residues 282–302 (FFVMLIMFPLAIANNFMDFWL). The Cytoplasmic segment spans residues 303-363 (SMKVCDLLQK…HCGLFHVNRE (61 aa)). A helical transmembrane segment spans residues 364–384 (MGFKMFVASVLYLLYLVQFDY). Over 385 to 387 (MNL) the chain is Extracellular.

Belongs to the insect chemoreceptor superfamily. Gustatory receptor (GR) family. Gr22e subfamily. Expressed in neurons of the dorsal pharyngeal sense organs of larvae.

The protein localises to the cell membrane. In terms of biological role, probable gustatory receptor which mediates acceptance or avoidance behavior, depending on its substrates. The sequence is that of Putative gustatory receptor 22d from Drosophila melanogaster (Fruit fly).